A 125-amino-acid chain; its full sequence is Large ribosomal subunit protein uL22c (125 aa).

Belongs to the universal ribosomal protein uL22 family. Part of the 50S ribosomal subunit.

Its subcellular location is the plastid. It localises to the chloroplast. Its function is as follows. This protein binds specifically to 23S rRNA. Functionally, the globular domain of the protein is located near the polypeptide exit tunnel on the outside of the subunit, while an extended beta-hairpin is found that lines the wall of the exit tunnel in the center of the 70S ribosome. The sequence is that of Large ribosomal subunit protein uL22c (rpl22) from Nuphar advena (Common spatterdock).